The primary structure comprises 181 residues: MSMKKENTLDYSKITATLMETFNYKSVMQVPKVEKVVINMGVGDAIFNVKVLDDVVEELKLLSGQSPVITKAKKAISNFKLREGMPIGAKVTLRGARKEAFLCKLTRLVFPRVRDFRGISGKSFDGRGNYALGLKEQIVFPEINIDKVKKIRGMDIIIVTTAKNNTQAKKLLELYGMPFKN.

This sequence belongs to the universal ribosomal protein uL5 family. In terms of assembly, part of the 50S ribosomal subunit; part of the 5S rRNA/L5/L18/L25 subcomplex. Contacts the 5S rRNA and the P site tRNA. Forms a bridge to the 30S subunit in the 70S ribosome.

Its function is as follows. This is one of the proteins that bind and probably mediate the attachment of the 5S RNA into the large ribosomal subunit, where it forms part of the central protuberance. In the 70S ribosome it contacts protein S13 of the 30S subunit (bridge B1b), connecting the 2 subunits; this bridge is implicated in subunit movement. Contacts the P site tRNA; the 5S rRNA and some of its associated proteins might help stabilize positioning of ribosome-bound tRNAs. The sequence is that of Large ribosomal subunit protein uL5 from Onion yellows phytoplasma (strain OY-M).